The chain runs to 205 residues: Outer-membrane lipoprotein LolB (205 aa).

An N-terminal signal peptide occupies residues 1 to 17 (MFLRHCITFTLIALLAG). Cys-18 carries the N-palmitoyl cysteine lipid modification. Cys-18 carries the S-diacylglycerol cysteine lipid modification.

Belongs to the LolB family. Monomer.

The protein resides in the cell outer membrane. Functionally, plays a critical role in the incorporation of lipoproteins in the outer membrane after they are released by the LolA protein. The sequence is that of Outer-membrane lipoprotein LolB from Pseudomonas putida (strain ATCC 47054 / DSM 6125 / CFBP 8728 / NCIMB 11950 / KT2440).